The chain runs to 408 residues: Argininosuccinate synthase (408 aa).

Residues A10–S18 and A37 contribute to the ATP site. Y90 and S95 together coordinate L-citrulline. G120 contacts ATP. Positions 122, 126, and 127 each coordinate L-aspartate. N126 serves as a coordination point for L-citrulline. R130, S181, S190, E266, and Y278 together coordinate L-citrulline.

It belongs to the argininosuccinate synthase family. Type 1 subfamily. As to quaternary structure, homotetramer.

It localises to the cytoplasm. The catalysed reaction is L-citrulline + L-aspartate + ATP = 2-(N(omega)-L-arginino)succinate + AMP + diphosphate + H(+). The protein operates within amino-acid biosynthesis; L-arginine biosynthesis; L-arginine from L-ornithine and carbamoyl phosphate: step 2/3. The chain is Argininosuccinate synthase from Cereibacter sphaeroides (strain ATCC 17029 / ATH 2.4.9) (Rhodobacter sphaeroides).